A 96-amino-acid chain; its full sequence is Small ribosomal subunit protein bS18 (96 aa).

It belongs to the bacterial ribosomal protein bS18 family. In terms of assembly, part of the 30S ribosomal subunit. Forms a tight heterodimer with protein bS6.

Its function is as follows. Binds as a heterodimer with protein bS6 to the central domain of the 16S rRNA, where it helps stabilize the platform of the 30S subunit. This is Small ribosomal subunit protein bS18 from Borreliella burgdorferi (strain ATCC 35210 / DSM 4680 / CIP 102532 / B31) (Borrelia burgdorferi).